The sequence spans 305 residues: Tyrosine recombinase XerC (305 aa).

The Core-binding (CB) domain maps to 2–88 (NQLELYIDTF…TLRSFYRFLE (87 aa)). The region spanning 109–294 (PVPGFLYQEE…TKDHLREAYM (186 aa)) is the Tyr recombinase domain. Residues R149, K173, H246, R249, and H272 contribute to the active site. Y281 acts as the O-(3'-phospho-DNA)-tyrosine intermediate in catalysis.

Belongs to the 'phage' integrase family. XerC subfamily. As to quaternary structure, forms a cyclic heterotetrameric complex composed of two molecules of XerC and two molecules of XerD.

It is found in the cytoplasm. Its function is as follows. Site-specific tyrosine recombinase, which acts by catalyzing the cutting and rejoining of the recombining DNA molecules. The XerC-XerD complex is essential to convert dimers of the bacterial chromosome into monomers to permit their segregation at cell division. It also contributes to the segregational stability of plasmids. In Oceanobacillus iheyensis (strain DSM 14371 / CIP 107618 / JCM 11309 / KCTC 3954 / HTE831), this protein is Tyrosine recombinase XerC.